The sequence spans 263 residues: Phosphate import ATP-binding protein PstB (263 aa).

Residues 16 to 258 form the ABC transporter domain; sequence VTARNVTVSY…PRDTRTQDYI (243 aa). Position 48 to 55 (48 to 55) interacts with ATP; that stretch reads GPSGCGKS.

The protein belongs to the ABC transporter superfamily. Phosphate importer (TC 3.A.1.7) family. The complex is composed of two ATP-binding proteins (PstB), two transmembrane proteins (PstC and PstA) and a solute-binding protein (PstS).

The protein resides in the cell inner membrane. The enzyme catalyses phosphate(out) + ATP + H2O = ADP + 2 phosphate(in) + H(+). Functionally, part of the ABC transporter complex PstSACB involved in phosphate import. Responsible for energy coupling to the transport system. This chain is Phosphate import ATP-binding protein PstB, found in Maricaulis maris (strain MCS10) (Caulobacter maris).